We begin with the raw amino-acid sequence, 233 residues long: Germin-like protein (233 aa).

Positions 1 to 22 are cleaved as a signal peptide; sequence MEAYKMFAFVVLLATTLYQAYA. An intrachain disulfide couples cysteine 32 to cysteine 49. Residues 63 to 215 form the Cupin type-1 domain; sequence RGLNMPANTD…RPSISMRIWS (153 aa). Mn(2+) is bound by residues histidine 111, histidine 113, glutamate 118, and histidine 162.

It belongs to the germin family. As to quaternary structure, oligomer (believed to be a pentamer but probably hexamer). Expressed at high levels in unstressed roots.

Its subcellular location is the secreted. It localises to the extracellular space. The protein resides in the apoplast. Functionally, may be involved in seed germination. The polypeptide is Germin-like protein (Mesembryanthemum crystallinum (Common ice plant)).